Consider the following 492-residue polypeptide: MSKAFDLVIIGAGSGGLEAGWNAATLYKKRVAVVDVQTVHGPPFFAALGGTCVNVGCVPKKLMVTGAQYMDQLRESAGFGWEFDASTIKANWKTLIAAKNAAVLDINKSYEDMFKDTEGLEFFLGWGALEQKNVVTVREGADPKSKVKERLQAEHIIIATGSWPQMLKIPGIEHCISSNEAFYLEEPPRRVLTVGGGFISVEFAGIFNAYKPVGGKVTLCYRNNPILRGFDYTLRQELTKQLVANGIDIMTNENPSKIELNPDGSKHVTFESGKTLDVDVVMMAIGRLPRTGYLQLQTVGVNLTDKGAIQVDEFSRTNVPNIYAIGDVTGRIMLTPVAINEGASVVDTIFGSKPRKTDHTRVASAVFSIPPIGTCGLTEEEAAKSFEKVAVYLSCFTPLMHNISGSKYKKFVAKIITDHGDGTVVGVHLLGDSSPEIIQAVGICMKLNAKISDFYNTIGVHPTSAEELCSMRTPSHYYIKGEKMETLPDSSL.

35–52 (DVQTVHGPPFFAALGGTC) provides a ligand contact to FAD. Cys52 and Cys57 form a disulfide bridge. His461 acts as the Proton acceptor in catalysis.

This sequence belongs to the class-I pyridine nucleotide-disulfide oxidoreductase family. As to quaternary structure, homodimer. Requires FAD as cofactor.

The protein localises to the cytoplasm. The catalysed reaction is trypanothione + NADP(+) = trypanothione disulfide + NADPH + H(+). Its function is as follows. Trypanothione is the parasite analog of glutathione; this enzyme is the equivalent of glutathione reductase. This is Trypanothione reductase (TPR) from Trypanosoma congolense.